A 111-amino-acid polypeptide reads, in one-letter code: Ribonuclease P protein component (111 aa).

Belongs to the RnpA family. In terms of assembly, consists of a catalytic RNA component (M1 or rnpB) and a protein subunit.

The enzyme catalyses Endonucleolytic cleavage of RNA, removing 5'-extranucleotides from tRNA precursor.. In terms of biological role, RNaseP catalyzes the removal of the 5'-leader sequence from pre-tRNA to produce the mature 5'-terminus. It can also cleave other RNA substrates such as 4.5S RNA. The protein component plays an auxiliary but essential role in vivo by binding to the 5'-leader sequence and broadening the substrate specificity of the ribozyme. This is Ribonuclease P protein component from Borrelia garinii subsp. bavariensis (strain ATCC BAA-2496 / DSM 23469 / PBi) (Borreliella bavariensis).